The primary structure comprises 526 residues: Probable di/tripeptide-binding protein 5 (526 aa).

The first 21 residues, 1–21 (MRLAAFSLFLAPLLLAQPAAA), serve as a signal peptide directing secretion.

This sequence belongs to the bacterial solute-binding protein 5 family. As to quaternary structure, the complex is composed of two ATP-binding proteins (DppD and DppF), two transmembrane proteins (DppB and DppC) and a solute-binding protein (DppA5). Five orthologous SBPs (DppA1-A5) are present in P.aeruginosa, which increases the substrate specificity of the DppBCDF transporter.

In terms of biological role, part of the ABC transporter DppABCDF involved in the uptake of various di/tripeptides. The sequence is that of Probable di/tripeptide-binding protein 5 from Pseudomonas aeruginosa (strain UCBPP-PA14).